The chain runs to 254 residues: Long form salivary protein D7LC (254 aa).

Positions 1-19 are cleaved as a signal peptide; the sequence is MNAVITSLLFLSLVGLGYS. 2 cysteine pairs are disulfide-bonded: Cys-36/Cys-66 and Cys-62/Cys-112. Thromboxane A2 is bound at residue Trp-49. Leukotriene C4 is bound at residue Trp-52. Thromboxane A2 is bound at residue Tyr-63. The leukotriene C4 site is built by Gly-136 and Lys-154. Lys-154 is a thromboxane A2 binding site. Intrachain disulfides connect Cys-162–Cys-178, Cys-174–Cys-221, and Cys-211–Cys-230.

This sequence belongs to the PBP/GOBP family.

It localises to the secreted. Its function is as follows. Modulates blood feeding of female sandflies on vertebrate species by binding and sequestering different mediators involved in the host response. Binds leukotriene C4, leukotriene D4, leukotriene E4 and U-46619, a stable analog of thromboxane A2. Does not bind histamine or serotonin. Inhibits platelet aggregation induced by low concentrations of collagen in thromboxane A2-dependent manner. This Phlebotomus papatasi (Sandfly) protein is Long form salivary protein D7LC.